A 138-amino-acid polypeptide reads, in one-letter code: UPF0201 protein TK1335 (138 aa).

It belongs to the UPF0201 family.

This chain is UPF0201 protein TK1335, found in Thermococcus kodakarensis (strain ATCC BAA-918 / JCM 12380 / KOD1) (Pyrococcus kodakaraensis (strain KOD1)).